Consider the following 645-residue polypeptide: UPF0313 protein CLB_0243 (645 aa).

One can recognise a Radical SAM core domain in the interval 295–566 (AIKEVKFSIT…RMQRALLQFS (272 aa)). Cysteine 309, cysteine 313, and cysteine 316 together coordinate [4Fe-4S] cluster. Positions 598 to 645 (NKPYKKSHKKNNAKNNNNHYNKNNNYNKNKDISKKNKKNSLSKHKKRK) are disordered. The span at 600–609 (PYKKSHKKNN) shows a compositional bias: basic residues. Low complexity predominate over residues 610–624 (AKNNNNHYNKNNNYN). The span at 632–645 (KNKKNSLSKHKKRK) shows a compositional bias: basic residues.

Belongs to the UPF0313 family. It depends on [4Fe-4S] cluster as a cofactor.

The chain is UPF0313 protein CLB_0243 from Clostridium botulinum (strain ATCC 19397 / Type A).